A 115-amino-acid chain; its full sequence is Replication initiation control protein YabA (115 aa).

Residues His90, Cys92, Cys106, and Cys109 each contribute to the Zn(2+) site.

Belongs to the YabA family. As to quaternary structure, homotetramer. Interacts with both DnaA and DnaN, acting as a bridge between these two proteins. It depends on Zn(2+) as a cofactor.

The protein resides in the cytoplasm. It is found in the nucleoid. Its function is as follows. Involved in control of chromosome replication initiation. Inhibits the cooperative binding of DnaA to the oriC region, thus negatively regulating initiation of chromosome replication. Inhibits the ability of DnaA-ATP to form a helix on DNA; does not disassemble preformed DnaA-DNA helices. Decreases the residence time of DnaA on the chromosome at its binding sites (oriC, replication forks and promoter-binding sites). Tethers DnaA to the replication machinery via the DNA polymerase beta sliding clamp subunit (dnaN). Associates with oriC and other DnaA targets on the chromosome in a DnaA-dependent manner. This chain is Replication initiation control protein YabA, found in Staphylococcus aureus (strain JH1).